Consider the following 775-residue polypeptide: Serine/threonine-protein kinase ppk6 (775 aa).

Ser-132 and Ser-134 each carry phosphoserine. One can recognise a Protein kinase domain in the interval 503 to 758; sequence YTTIKELGIG…IEETLQHHWF (256 aa). ATP is bound by residues 509–517 and Lys-533; that span reads LGIGAYGQV. Asp-636 (proton acceptor) is an active-site residue.

This sequence belongs to the protein kinase superfamily. Ser/Thr protein kinase family.

It is found in the cytoplasm. The protein resides in the nucleus. The catalysed reaction is L-seryl-[protein] + ATP = O-phospho-L-seryl-[protein] + ADP + H(+). It catalyses the reaction L-threonyl-[protein] + ATP = O-phospho-L-threonyl-[protein] + ADP + H(+). This Schizosaccharomyces pombe (strain 972 / ATCC 24843) (Fission yeast) protein is Serine/threonine-protein kinase ppk6 (ppk6).